A 169-amino-acid chain; its full sequence is Chorismate pyruvate-lyase (169 aa).

Met-35, Arg-77, Leu-115, and Glu-156 together coordinate substrate.

It belongs to the UbiC family. As to quaternary structure, monomer.

Its subcellular location is the cytoplasm. The enzyme catalyses chorismate = 4-hydroxybenzoate + pyruvate. The protein operates within cofactor biosynthesis; ubiquinone biosynthesis. In terms of biological role, removes the pyruvyl group from chorismate, with concomitant aromatization of the ring, to provide 4-hydroxybenzoate (4HB) for the ubiquinone pathway. The polypeptide is Chorismate pyruvate-lyase (Cronobacter sakazakii (strain ATCC BAA-894) (Enterobacter sakazakii)).